Consider the following 143-residue polypeptide: Large ribosomal subunit protein uL11 (143 aa).

Belongs to the universal ribosomal protein uL11 family. Part of the ribosomal stalk of the 50S ribosomal subunit. Interacts with L10 and the large rRNA to form the base of the stalk. L10 forms an elongated spine to which L12 dimers bind in a sequential fashion forming a multimeric L10(L12)X complex. Post-translationally, one or more lysine residues are methylated.

Its function is as follows. Forms part of the ribosomal stalk which helps the ribosome interact with GTP-bound translation factors. The chain is Large ribosomal subunit protein uL11 from Aromatoleum aromaticum (strain DSM 19018 / LMG 30748 / EbN1) (Azoarcus sp. (strain EbN1)).